Consider the following 120-residue polypeptide: Large ribosomal subunit protein bL19 (120 aa).

This sequence belongs to the bacterial ribosomal protein bL19 family.

This protein is located at the 30S-50S ribosomal subunit interface and may play a role in the structure and function of the aminoacyl-tRNA binding site. The sequence is that of Large ribosomal subunit protein bL19 from Kocuria rhizophila (strain ATCC 9341 / DSM 348 / NBRC 103217 / DC2201).